Consider the following 441-residue polypeptide: Trigger factor (441 aa).

The 83-residue stretch at 175–257 (GDFISLSLHV…VNAVIEVVAP (83 aa)) folds into the PPIase FKBP-type domain.

It belongs to the FKBP-type PPIase family. Tig subfamily.

It is found in the cytoplasm. It catalyses the reaction [protein]-peptidylproline (omega=180) = [protein]-peptidylproline (omega=0). In terms of biological role, involved in protein export. Acts as a chaperone by maintaining the newly synthesized protein in an open conformation. Functions as a peptidyl-prolyl cis-trans isomerase. The polypeptide is Trigger factor (Chlamydia abortus (strain DSM 27085 / S26/3) (Chlamydophila abortus)).